The following is a 369-amino-acid chain: Anhydro-N-acetylmuramic acid kinase (369 aa).

12–19 contributes to the ATP binding site; it reads GTSMDGVD.

The protein belongs to the anhydro-N-acetylmuramic acid kinase family.

It carries out the reaction 1,6-anhydro-N-acetyl-beta-muramate + ATP + H2O = N-acetyl-D-muramate 6-phosphate + ADP + H(+). It functions in the pathway amino-sugar metabolism; 1,6-anhydro-N-acetylmuramate degradation. Its pathway is cell wall biogenesis; peptidoglycan recycling. Its function is as follows. Catalyzes the specific phosphorylation of 1,6-anhydro-N-acetylmuramic acid (anhMurNAc) with the simultaneous cleavage of the 1,6-anhydro ring, generating MurNAc-6-P. Is required for the utilization of anhMurNAc either imported from the medium or derived from its own cell wall murein, and thus plays a role in cell wall recycling. This is Anhydro-N-acetylmuramic acid kinase from Shewanella sp. (strain MR-4).